The sequence spans 289 residues: ATP synthase gamma chain (289 aa).

It belongs to the ATPase gamma chain family. As to quaternary structure, F-type ATPases have 2 components, CF(1) - the catalytic core - and CF(0) - the membrane proton channel. CF(1) has five subunits: alpha(3), beta(3), gamma(1), delta(1), epsilon(1). CF(0) has three main subunits: a, b and c.

The protein localises to the cell inner membrane. Functionally, produces ATP from ADP in the presence of a proton gradient across the membrane. The gamma chain is believed to be important in regulating ATPase activity and the flow of protons through the CF(0) complex. This chain is ATP synthase gamma chain, found in Cereibacter sphaeroides (strain ATCC 17023 / DSM 158 / JCM 6121 / CCUG 31486 / LMG 2827 / NBRC 12203 / NCIMB 8253 / ATH 2.4.1.) (Rhodobacter sphaeroides).